The primary structure comprises 321 residues: Peptidase 1 (321 aa).

A signal peptide spans 1-18; it reads MKFVLAIASLLVLSTVYA. The propeptide at 19–98 is activation peptide; sequence RPASIKTFEE…LKTQFDLNAE (80 aa). 3 cysteine pairs are disulfide-bonded: Cys-102/Cys-216, Cys-130/Cys-170, and Cys-164/Cys-202. Cys-133 is a catalytic residue. Asn-151 carries N-linked (GlcNAc...) asparagine glycosylation. Catalysis depends on residues His-269 and Arg-288.

Belongs to the peptidase C1 family. As to quaternary structure, monomer.

The protein resides in the secreted. It carries out the reaction Broad endopeptidase specificity.. Functionally, thiol protease that hydrolyzes proteins, with a preference for Phe or basic residues. This Dermatophagoides farinae (American house dust mite) protein is Peptidase 1 (DERF1).